A 115-amino-acid polypeptide reads, in one-letter code: NADH-ubiquinone oxidoreductase chain 3 (115 aa).

Transmembrane regions (helical) follow at residues 3-23 (LFIM…LNLL), 55-75 (FFMV…LLPL), and 87-107 (TITW…YEWL).

Belongs to the complex I subunit 3 family.

It is found in the mitochondrion membrane. It carries out the reaction a ubiquinone + NADH + 5 H(+)(in) = a ubiquinol + NAD(+) + 4 H(+)(out). In terms of biological role, core subunit of the mitochondrial membrane respiratory chain NADH dehydrogenase (Complex I) that is believed to belong to the minimal assembly required for catalysis. Complex I functions in the transfer of electrons from NADH to the respiratory chain. The immediate electron acceptor for the enzyme is believed to be ubiquinone. This chain is NADH-ubiquinone oxidoreductase chain 3 (MT-ND3), found in Alligator mississippiensis (American alligator).